Reading from the N-terminus, the 269-residue chain is Autophagy-related protein 5 (269 aa).

Lys102 is covalently cross-linked (Glycyl lysine isopeptide (Lys-Gly) (interchain with G-Cter in ATG12)).

It belongs to the ATG5 family. As to quaternary structure, conjugated with ATG12. The ATG5-ATG12 conjugate forms a complex with several units of ATG16. The ATG12-ATG5 conjugate also associates with ATG3. In terms of processing, conjugated to ATG12; which is essential for autophagy. Conjugation with ATG12 involves ATG7 as an E1-like activating enzyme and ATG10 as an E2-like conjugating enzyme.

It localises to the preautophagosomal structure membrane. Its function is as follows. Involved in cytoplasm to vacuole transport (Cvt) and autophagic vesicle formation. Autophagy is essential for maintenance of amino acid levels and protein synthesis under nitrogen starvation. Required for selective autophagic degradation of the nucleus (nucleophagy). Also required for mitophagy, which eliminates defective or superfluous mitochondria in order to fulfill cellular energy requirements and prevent excess ROS production. Conjugation with ATG12, through a ubiquitin-like conjugating system involving ATG7 as an E1-like activating enzyme and ATG10 as an E2-like conjugating enzyme, is essential for its function. The ATG12-ATG5 conjugate acts as an E3-like enzyme which is required for lipidation of ATG8 and ATG8 association to the vesicle membranes. ATG12-ATG5 rearranges the ATG3 catalytic center and enhances its E2 activity. Required for proper vegetative growth, asexual/sexual reproduction, but, unlike several plant and animal pathogenic fungi, where ATG5 is required for infection, in B.bassiana it is dispensable for pathogenesis. The polypeptide is Autophagy-related protein 5 (Beauveria bassiana (strain ARSEF 2860) (White muscardine disease fungus)).